The primary structure comprises 96 residues: Co-chaperonin GroES (96 aa).

This sequence belongs to the GroES chaperonin family. As to quaternary structure, heptamer of 7 subunits arranged in a ring. Interacts with the chaperonin GroEL.

It is found in the cytoplasm. Its function is as follows. Together with the chaperonin GroEL, plays an essential role in assisting protein folding. The GroEL-GroES system forms a nano-cage that allows encapsulation of the non-native substrate proteins and provides a physical environment optimized to promote and accelerate protein folding. GroES binds to the apical surface of the GroEL ring, thereby capping the opening of the GroEL channel. The sequence is that of Co-chaperonin GroES from Shewanella oneidensis (strain ATCC 700550 / JCM 31522 / CIP 106686 / LMG 19005 / NCIMB 14063 / MR-1).